The following is a 95-amino-acid chain: Ferredoxin-4 (95 aa).

The region spanning 2-95 is the 2Fe-2S ferredoxin-type domain; that stretch reads DKATLTFTDV…LGGAVKVRPA (94 aa). Residues Cys-38, Cys-43, Cys-46, and Cys-81 each coordinate [2Fe-2S] cluster.

It belongs to the 2Fe2S plant-type ferredoxin family. Requires [2Fe-2S] cluster as cofactor.

Functionally, ferredoxins are iron-sulfur proteins that transfer electrons in a wide variety of metabolic reactions. This ferredoxin is required for nitrogen fixation. This is Ferredoxin-4 (fdxC) from Rhodobacter capsulatus (Rhodopseudomonas capsulata).